The sequence spans 339 residues: Protoheme IX farnesyltransferase (339 aa).

Residues M1–R27 are disordered. The next 9 helical transmembrane spans lie at I45–P65, G67–L87, A117–V136, S140–L159, Q165–V185, W191–L211, V236–P256, L257–V277, and P309–V329.

The protein belongs to the UbiA prenyltransferase family. Protoheme IX farnesyltransferase subfamily.

The protein resides in the cell membrane. It catalyses the reaction heme b + (2E,6E)-farnesyl diphosphate + H2O = Fe(II)-heme o + diphosphate. It participates in porphyrin-containing compound metabolism; heme O biosynthesis; heme O from protoheme: step 1/1. Converts heme B (protoheme IX) to heme O by substitution of the vinyl group on carbon 2 of heme B porphyrin ring with a hydroxyethyl farnesyl side group. The chain is Protoheme IX farnesyltransferase from Kineococcus radiotolerans (strain ATCC BAA-149 / DSM 14245 / SRS30216).